We begin with the raw amino-acid sequence, 813 residues long: Fibroblast growth factor receptor 2 (813 aa).

The first 14 residues, 1-14 (MLLLALLAFLLVSR), serve as a signal peptide directing secretion. Topologically, residues 18 to 367 (RPSYSMVDDT…EDNPVPYYME (350 aa)) are extracellular. One can recognise an Ig-like C2-type 1 domain in the interval 21–117 (YSMVDDTTPE…NSHFFHVNVT (97 aa)). Residues cysteine 58 and cysteine 103 are joined by a disulfide bond. N-linked (GlcNAc...) asparagine glycosylation is found at asparagine 79 and asparagine 115. The tract at residues 119–143 (ASSSGDDEDDNDGSEDFTNDNNNIR) is disordered. Acidic residues predominate over residues 123–136 (GDDEDDNDGSEDFT). Ig-like C2-type domains lie at 145–237 (PYWT…YHLD) and 246–348 (PILQ…AWLT). Residues 152–169 (KMEKKLHAVSAANTVKLR) are heparin-binding. Cysteine 170 and cysteine 221 form a disulfide bridge. 5 N-linked (GlcNAc...) asparagine glycosylation sites follow: asparagine 231, asparagine 255, asparagine 287, asparagine 308, and asparagine 321. Cysteine 268 and cysteine 332 are joined by a disulfide. The chain crosses the membrane as a helical span at residues 368 to 388 (IGIYSTGIFIIFCMVVVCVVC). At 389 to 813 (RMRQGAKKKK…FQHVNGVVKT (425 aa)) the chain is on the cytoplasmic side. A Phosphotyrosine; by autocatalysis modification is found at tyrosine 456. The region spanning 471-760 (LTLGKPLGEG…LTLTTNEEYL (290 aa)) is the Protein kinase domain. Residues 477–485 (LGEGCFGQV), lysine 507, 555–557 (EYA), and asparagine 561 contribute to the ATP site. Tyrosine 576 is subject to Phosphotyrosine; by autocatalysis. Residue aspartate 616 is the Proton acceptor of the active site. A phosphotyrosine; by autocatalysis mark is found at tyrosine 646, tyrosine 647, and tyrosine 759. The segment covering 771 to 792 (PSFPDSSCSASSSSGDDSVFSP) has biased composition (low complexity). The segment at 771–801 (PSFPDSSCSASSSSGDDSVFSPDPMPHDPCL) is disordered.

The protein belongs to the protein kinase superfamily. Tyr protein kinase family. Fibroblast growth factor receptor subfamily. In terms of assembly, monomer. Homodimer after ligand binding. Autophosphorylated. Binding of FGF family members together with heparan sulfate proteoglycan or heparin promotes receptor dimerization and autophosphorylation on tyrosine residues. Autophosphorylation occurs in trans between the two FGFR molecules present in the dimer. Post-translationally, N-glycosylated in the endoplasmic reticulum. The N-glycan chains undergo further maturation to an Endo H-resistant form in the Golgi apparatus. In terms of processing, ubiquitinated. FGFR2 is rapidly ubiquitinated after autophosphorylation, leading to internalization and degradation. Subject to degradation both in lysosomes and by the proteasome. In terms of tissue distribution, expressed in the anterior neural plate in early neurula stage embryos. Later in development, the protein is also expressed in the eye anlagen, midbrain-hindbrain boundary and otic vesicle.

It localises to the cell membrane. The protein localises to the golgi apparatus. It is found in the cytoplasmic vesicle. The enzyme catalyses L-tyrosyl-[protein] + ATP = O-phospho-L-tyrosyl-[protein] + ADP + H(+). Present in an inactive conformation in the absence of bound ligand. Ligand binding leads to dimerization and activation by autophosphorylation on tyrosine residues. Its function is as follows. Tyrosine-protein kinase that acts as a cell-surface receptor for fibroblast growth factors and plays an essential role in the regulation of cell proliferation, differentiation, migration and apoptosis, and in the regulation of embryonic development. Required for normal embryonic patterning, limb bud development, lung morphogenesis, osteogenesis and skin development. Plays an essential role in the regulation of osteoblast differentiation, proliferation and apoptosis, and is required for normal skeleton development. Promotes cell proliferation in keratinocytes and immature osteoblasts, but promotes apoptosis in differentiated osteoblasts. Phosphorylates PLCG1, FRS2 and PAK4. Ligand binding leads to the activation of several signaling cascades. Activation of PLCG1 leads to the production of the cellular signaling molecules diacylglycerol and inositol 1,4,5-trisphosphate. Phosphorylation of FRS2 triggers recruitment of GRB2, GAB1, PIK3R1 and SOS1, and mediates activation of RAS, MAPK1/ERK2, MAPK3/ERK1 and the MAP kinase signaling pathway, as well as of the AKT1 signaling pathway. FGFR2 signaling is down-regulated by ubiquitination, internalization and degradation. Mutations that lead to constitutive kinase activation or impair normal FGFR2 maturation, internalization and degradation lead to aberrant signaling. Over-expressed FGFR2 promotes activation of STAT1. The sequence is that of Fibroblast growth factor receptor 2 (fgfr2) from Xenopus laevis (African clawed frog).